The sequence spans 84 residues: Large ribosomal subunit protein bL27 (84 aa).

Positions 1–21 (MAHKKGGGSTKNGRDSNPQYL) are disordered.

It belongs to the bacterial ribosomal protein bL27 family.

This chain is Large ribosomal subunit protein bL27, found in Chloroherpeton thalassium (strain ATCC 35110 / GB-78).